The chain runs to 423 residues: UPF0597 protein TTE0269 (423 aa).

This sequence belongs to the UPF0597 family.

The chain is UPF0597 protein TTE0269 from Caldanaerobacter subterraneus subsp. tengcongensis (strain DSM 15242 / JCM 11007 / NBRC 100824 / MB4) (Thermoanaerobacter tengcongensis).